A 459-amino-acid chain; its full sequence is Proton-coupled folate transporter (459 aa).

An N-acetylmethionine modification is found at Met1. At 1-25 (MEGRANSPGEPRAWPTRSVLCRGCV) the chain is on the cytoplasmic side. Residues 26–44 (EPLVFLANFALVLQGPVTT) traverse the membrane as a helical segment. Topologically, residues 45-82 (QYLWHRFSADLGYNGTRHRDSCSNHSVDPIAQEVETLT) are extracellular. Residues Asn58 and Asn68 are each glycosylated (N-linked (GlcNAc...) asparagine). A disulfide bridge connects residues Cys66 and Cys298. A helical membrane pass occupies residues 83–108 (SHWTLYMNVGGFLVGLFSSTLLGAWS). Over 109 to 112 (DCVG) the chain is Cytoplasmic. Residues 113-135 (RRPLLVLASLGLLLQTVLSIFVV) traverse the membrane as a helical segment. Residues 136 to 140 (QLHLH) lie on the Extracellular side of the membrane. The chain crosses the membrane as a helical span at residues 141–154 (IGYLVLGRILCALL). Residues 155 to 177 (GDFSGLLAASFASVADVSSSRTR) lie on the Cytoplasmic side of the membrane. Asp156 and Glu185 together coordinate H(+). Residues 178-203 (TIRMALLEACIGVAGMLASFIGGFLL) traverse the membrane as a helical segment. At 204–208 (QEQVY) the chain is on the extracellular side. Residues 209 to 227 (VNPFWLALAVLTVMTLYAA) form a helical membrane-spanning segment. At 228–266 (FCFGETVKERTPTRLFTLRHHRSVIQLYVTQAPEKSRKH) the chain is on the cytoplasmic side. A helical transmembrane segment spans residues 267 to 289 (LALYSLAIFVMITVHLGAQDILT). His281 provides a ligand contact to H(+). At 290–302 (LYELSAPLCWDSR) the chain is on the extracellular side. The chain crosses the membrane as a helical span at residues 303–325 (LISYGSAAQQLPYLTSLLGLRLL). Topologically, residues 326–331 (QYCLAD) are cytoplasmic. Residues 332-351 (TWVAEIGLVFNILGMMVFAF) traverse the membrane as a helical segment. The Extracellular portion of the chain corresponds to 352–355 (ATIT). A helical transmembrane segment spans residues 356 to 376 (PLMFTGYGLLFLSLVVTPIIR). Topologically, residues 377–388 (AKLSRLVRQSEQ) are cytoplasmic. The helical transmembrane segment at 389–414 (GALFSALACVNGLAMLMASGIFNSLY) threads the bilayer. Topologically, residues 415–422 (PATLNLMK) are extracellular. The helical transmembrane segment at 423–441 (GFPFLLAAGLLFIPAILMG) threads the bilayer. The Cytoplasmic segment spans residues 442 to 459 (ILERDNHCPEFQEFSQSP). The residue at position 458 (Ser458) is a Phosphoserine.

This sequence belongs to the major facilitator superfamily. SLC46A family. In terms of assembly, monomer. Expressed in retina and retinal pigment epithelium.

The protein localises to the cell membrane. The protein resides in the apical cell membrane. It localises to the basolateral cell membrane. It is found in the endosome membrane. Its subcellular location is the cytoplasm. It carries out the reaction folate(in) + H(+)(in) = folate(out) + H(+)(out). The catalysed reaction is (6S)-5-methyl-5,6,7,8-tetrahydrofolate(in) + H(+)(in) = (6S)-5-methyl-5,6,7,8-tetrahydrofolate(out) + H(+)(out). The enzyme catalyses methotrexate(in) + H(+)(in) = methotrexate(out) + H(+)(out). It catalyses the reaction pemetrexed(in) + H(+)(in) = pemetrexed(out) + H(+)(out). Proton-coupled folate symporter that mediates folate absorption using an H(+) gradient as a driving force. Involved in the intestinal absorption of folates at the brush-border membrane of the proximal jejunum, and the transport from blood to cerebrospinal fluid across the choroid plexus. Functions at acidic pH via alternate outward- and inward-open conformation states. Protonation of residues in the outward open state primes the protein for transport. Binding of folate promotes breaking of salt bridge network and subsequent closure of the extracellular gate, leading to the inward-open state and release of protons and folate. Also able to transport antifolate drugs, such as methotrexate and pemetrexed. Involved in FOLR1-mediated endocytosis by serving as a route of export of folates from acidified endosomes. Also acts as a lower-affinity, pH-independent heme carrier protein and constitutes the main importer of heme in the intestine. Imports heme in the retina and retinal pigment epithelium, in neurons of the hippocampus, in hepatocytes and in the renal epithelial cells. Hence, participates in the trafficking of heme and increases intracellular iron content. The polypeptide is Proton-coupled folate transporter (Bos taurus (Bovine)).